The primary structure comprises 500 residues: Glycerol kinase (500 aa).

Thr11 contacts ADP. ATP contacts are provided by Thr11, Thr12, and Ser13. Position 11 (Thr11) interacts with sn-glycerol 3-phosphate. Arg15 is a binding site for ADP. 4 residues coordinate sn-glycerol 3-phosphate: Arg81, Glu82, Tyr133, and Asp242. Glycerol contacts are provided by Arg81, Glu82, Tyr133, Asp242, and Gln243. Positions 264 and 307 each coordinate ADP. The ATP site is built by Thr264, Gly307, Gln311, and Gly411. Gly411 is an ADP binding site.

Belongs to the FGGY kinase family.

The catalysed reaction is glycerol + ATP = sn-glycerol 3-phosphate + ADP + H(+). It functions in the pathway polyol metabolism; glycerol degradation via glycerol kinase pathway; sn-glycerol 3-phosphate from glycerol: step 1/1. Its activity is regulated as follows. Inhibited by fructose 1,6-bisphosphate (FBP). Functionally, key enzyme in the regulation of glycerol uptake and metabolism. Catalyzes the phosphorylation of glycerol to yield sn-glycerol 3-phosphate. This Bradyrhizobium diazoefficiens (strain JCM 10833 / BCRC 13528 / IAM 13628 / NBRC 14792 / USDA 110) protein is Glycerol kinase.